Consider the following 258-residue polypeptide: Meiotic drive suppressor wtf20 (258 aa).

The disordered stretch occupies residues 1–71 (MKNNYTSLKS…GPTEIANPNV (71 aa)). A compositionally biased stretch (basic and acidic residues) spans 19-30 (KTDHEIDLEKGL). Helical transmembrane passes span 84-106 (IYFL…TAWV), 121-140 (FSVT…FYFY), and 196-216 (SASA…AETV).

It belongs to the WTF family. Homomer. Interacts with other proteins that exhibit high sequence similarity.

It localises to the spore membrane. It is found in the vacuole membrane. Acts as a suppressor component of the dual wtf meiotic drive system, and can suppress but not confer meiotic drive by compatible poisons. Wtf meiotic drive systems promote unequal transmission of alleles from the parental zygote to progeny spores by encoding a poison and an antidote from the same locus; the poison is trans-acting and forms toxic aggregates in all spores within an ascus, wherease the antidote is spore-specific and targets aggregates for degradation by the vacuole. Meiotic drive by wtf systems therefore lead to poisoning of all progeny that do not inherit the dual poison/antidote allele, or express a compatible antidote. The protein is Meiotic drive suppressor wtf20 of Schizosaccharomyces pombe (strain 972 / ATCC 24843) (Fission yeast).